Reading from the N-terminus, the 503-residue chain is 4-trimethylaminobutyraldehyde dehydrogenase (503 aa).

Residues Lys189 and 241–245 (GSVPT) each bind NAD(+). Glu263 functions as the Proton acceptor in the catalytic mechanism. Cys297 (nucleophile) is an active-site residue. Glu400 serves as a coordination point for NAD(+).

Belongs to the aldehyde dehydrogenase family. In terms of assembly, homotetramer.

The protein resides in the cytoplasm. The protein localises to the cytosol. It carries out the reaction 4-(trimethylamino)butanal + NAD(+) + H2O = 4-(trimethylamino)butanoate + NADH + 2 H(+). The catalysed reaction is an aldehyde + NAD(+) + H2O = a carboxylate + NADH + 2 H(+). The protein operates within amine and polyamine biosynthesis; carnitine biosynthesis. Functionally, converts gamma-trimethylaminobutyraldehyde into gamma-butyrobetaine with high efficiency (in vitro). Can catalyze the irreversible oxidation of a broad range of aldehydes to the corresponding acids in an NAD-dependent reaction, but with low efficiency. The sequence is that of 4-trimethylaminobutyraldehyde dehydrogenase (aldh9A1) from Gadus morhua subsp. callarias (Baltic cod).